Here is a 61-residue protein sequence, read N- to C-terminus: Small ribosomal subunit protein uS14 (61 aa).

Residues Cys24, Cys27, Cys40, and Cys43 each coordinate Zn(2+).

The protein belongs to the universal ribosomal protein uS14 family. Zinc-binding uS14 subfamily. In terms of assembly, part of the 30S ribosomal subunit. Contacts proteins S3 and S10. Requires Zn(2+) as cofactor.

In terms of biological role, binds 16S rRNA, required for the assembly of 30S particles and may also be responsible for determining the conformation of the 16S rRNA at the A site. This Ruminiclostridium cellulolyticum (strain ATCC 35319 / DSM 5812 / JCM 6584 / H10) (Clostridium cellulolyticum) protein is Small ribosomal subunit protein uS14.